The following is a 605-amino-acid chain: Glucose oxidase (605 aa).

The N-terminal stretch at 1–16 is a signal peptide; it reads MKTILSSSLVVSMAAA. Residues Leu-51 and Thr-52 each coordinate FAD. A glycan (N-linked (GlcNAc...) asparagine) is linked at Asn-65. Glu-72 is a binding site for FAD. A glycan (N-linked (GlcNAc...) asparagine) is linked at Asn-111. 4 residues coordinate FAD: Ser-125, Asn-129, Gly-130, and Thr-132. Cys-186 and Cys-228 are joined by a disulfide. N-linked (GlcNAc...) asparagine glycosylation occurs at Asn-190. Val-272 provides a ligand contact to FAD. Asn-280, Asn-377, Asn-410, and Asn-495 each carry an N-linked (GlcNAc...) asparagine glycan. Residue His-538 is the Proton acceptor of the active site. O2-binding residues include Arg-559 and Val-560. Residues Gly-571 and Met-583 each coordinate FAD.

This sequence belongs to the GMC oxidoreductase family. In terms of assembly, homodimer. FAD serves as cofactor.

Its subcellular location is the secreted. The protein resides in the cell wall. It is found in the cytoplasm. The protein localises to the extracellular space. It localises to the extracellular matrix. It catalyses the reaction beta-D-glucose + O2 = D-glucono-1,5-lactone + H2O2. Its function is as follows. Glucose oxidase catalyzes the oxidation of beta-D-glucose to D-glucono-delta-lactone and hydrogen peroxide in the presence of molecular oxygen. Acts as a critical factor modulating pathogenicity by controlling transcription of genes important for fungal secondary metabolism and infection such as those coding for enzymes involved in degradation of the host cell wall. This Aspergillus carbonarius (strain ITEM 5010) protein is Glucose oxidase.